The following is a 534-amino-acid chain: MTDQTTRLPVRRALISVSDKTGVVDFARELEALGVEILSTGGTFKLLRENGIAAIEVADYTGFPEMMDGRVKTLHPKIHGGILGRRDLDGAVMAEHGIAPIDLVAVNLYPFAATVAKPGCTLPDAIENIDIGGPTMVRSAAKNHKDVAIVVNAEDYAAVVDNLKNGGLTYAQRFDLALKAFEHTAGYDGMIANYLGGIDQSTEQLSTDNRSLFPRTYNMQFIKAQDMRYGENPHQQAAFYVEKPDEACVATARQLQGKELSFNNVADTDAALECVKSFTKPACVIVKHANPCGVAVVPENEGGIRKAYDLAYATDSESAFGGIIAFNRELDGETAQAIVERQFVEVIIAPKVSQAARDVVASKANVRLLECGEWPAERSPGWDYKRVNGGLLIQSRDIGMITEADLKIVTQRAPTEQEIHDLIFAWKVAKFVKSNAIVYAKNRQTVGVGAGQMSRVNSARIAAIKAEHAGLQVQGAVMASDAFFPFRDGIDNAAKAGITAVIQPGGSMRDNEVIAAADEAGIAMVFTGMRHFRH.

The region spanning 6–151 (TRLPVRRALI…KNHKDVAIVV (146 aa)) is the MGS-like domain.

Belongs to the PurH family.

The enzyme catalyses (6R)-10-formyltetrahydrofolate + 5-amino-1-(5-phospho-beta-D-ribosyl)imidazole-4-carboxamide = 5-formamido-1-(5-phospho-D-ribosyl)imidazole-4-carboxamide + (6S)-5,6,7,8-tetrahydrofolate. The catalysed reaction is IMP + H2O = 5-formamido-1-(5-phospho-D-ribosyl)imidazole-4-carboxamide. It functions in the pathway purine metabolism; IMP biosynthesis via de novo pathway; 5-formamido-1-(5-phospho-D-ribosyl)imidazole-4-carboxamide from 5-amino-1-(5-phospho-D-ribosyl)imidazole-4-carboxamide (10-formyl THF route): step 1/1. It participates in purine metabolism; IMP biosynthesis via de novo pathway; IMP from 5-formamido-1-(5-phospho-D-ribosyl)imidazole-4-carboxamide: step 1/1. The protein is Bifunctional purine biosynthesis protein PurH of Stutzerimonas stutzeri (strain A1501) (Pseudomonas stutzeri).